A 288-amino-acid polypeptide reads, in one-letter code: Phosphatidylserine decarboxylase proenzyme (288 aa).

Active-site charge relay system; for autoendoproteolytic cleavage activity residues include aspartate 90, histidine 147, and serine 254. Serine 254 serves as the catalytic Schiff-base intermediate with substrate; via pyruvic acid; for decarboxylase activity. Pyruvic acid (Ser); by autocatalysis is present on serine 254.

The protein belongs to the phosphatidylserine decarboxylase family. PSD-B subfamily. Prokaryotic type I sub-subfamily. In terms of assembly, heterodimer of a large membrane-associated beta subunit and a small pyruvoyl-containing alpha subunit. Pyruvate is required as a cofactor. In terms of processing, is synthesized initially as an inactive proenzyme. Formation of the active enzyme involves a self-maturation process in which the active site pyruvoyl group is generated from an internal serine residue via an autocatalytic post-translational modification. Two non-identical subunits are generated from the proenzyme in this reaction, and the pyruvate is formed at the N-terminus of the alpha chain, which is derived from the carboxyl end of the proenzyme. The autoendoproteolytic cleavage occurs by a canonical serine protease mechanism, in which the side chain hydroxyl group of the serine supplies its oxygen atom to form the C-terminus of the beta chain, while the remainder of the serine residue undergoes an oxidative deamination to produce ammonia and the pyruvoyl prosthetic group on the alpha chain. During this reaction, the Ser that is part of the protease active site of the proenzyme becomes the pyruvoyl prosthetic group, which constitutes an essential element of the active site of the mature decarboxylase.

The protein localises to the cell membrane. The catalysed reaction is a 1,2-diacyl-sn-glycero-3-phospho-L-serine + H(+) = a 1,2-diacyl-sn-glycero-3-phosphoethanolamine + CO2. It functions in the pathway phospholipid metabolism; phosphatidylethanolamine biosynthesis; phosphatidylethanolamine from CDP-diacylglycerol: step 2/2. Functionally, catalyzes the formation of phosphatidylethanolamine (PtdEtn) from phosphatidylserine (PtdSer). This Hamiltonella defensa subsp. Acyrthosiphon pisum (strain 5AT) protein is Phosphatidylserine decarboxylase proenzyme.